The following is a 608-amino-acid chain: ATM1-type heavy metal exporter (608 aa).

The Cytoplasmic portion of the chain corresponds to 1 to 38; the sequence is MPPETATNPKDARHDGWQTLKRFLPYLWPADNAVLRRR. The chain crosses the membrane as a helical span at residues 39–60; it reads VVGAILMVLLGKATTLALPFAY. The ABC transmembrane type-1 domain occupies 39–327; it reads VVGAILMVLL…LGMVYRTIRQ (289 aa). The Periplasmic segment spans residues 61 to 82; the sequence is KKAVDAMTLGGGAQPALTVALA. A helical transmembrane segment spans residues 83–105; sequence FVLAYALGRFSGVLFDNLRNIVF. Residues 106–154 lie on the Cytoplasmic side of the membrane; sequence ERVGQDATRHLAENVFARLHKLSLRFHLARRTGEVTKVIERGTKSIDTM. The chain crosses the membrane as a helical span at residues 155–178; it reads LYFLLFNIAPTVIELTAVIVIFWL. Residue Asn179 is a topological domain, periplasmic. A helical transmembrane segment spans residues 180-202; it reads FGLGLVTATILAVIAYVWTTRTI. The Cytoplasmic segment spans residues 203–266; the sequence is TEWRTHLREK…AAVKSENSLG (64 aa). Glutathione-binding positions include 206-210 and 269-272; these read RTHLR and NIAQ. The helical transmembrane segment at 267–285 threads the bilayer; sequence LLNIAQALIVNLLMAGAMA. Topologically, residues 286–300 are periplasmic; it reads WTVYGWSQGKLTVGD. The chain crosses the membrane as a helical span at residues 301-322; the sequence is LVFVNTYLTQLFRPLDMLGMVY. Position 316 to 319 (316 to 319) interacts with glutathione; it reads DMLG. The Cytoplasmic portion of the chain corresponds to 323–608; sequence RTIRQGLIDM…ESAEVSEAAE (286 aa). The 235-residue stretch at 361-595 folds into the ABC transporter domain; it reads VTFDNVVFGY…DGLYAEMWAR (235 aa). ATP is bound by residues Tyr370 and 394–405; that span reads GPSGAGKSTIAR.

This sequence belongs to the ABC transporter superfamily. ABCB family. Heavy Metal importer (TC 3.A.1.210) subfamily. Homodimer.

The protein resides in the cell inner membrane. Its function is as follows. Mediates the ATP-dependent export of glutathione-conjugated substrates, such as heavy metal-glutathione conjugates. ATP hydrolysis is stimulated by glutathione binding. Protects cells against toxic heavy metal ions, such as silver and mercury ions. May also mediate the transport of glutathione-conjugated aromatic hydrocarbons, such as dinitrobenzene. This chain is ATM1-type heavy metal exporter (atm1), found in Novosphingobium aromaticivorans (strain ATCC 700278 / DSM 12444 / CCUG 56034 / CIP 105152 / NBRC 16084 / F199).